The primary structure comprises 194 residues: ATP-dependent Clp protease proteolytic subunit (194 aa).

Ser97 (nucleophile) is an active-site residue. Residue His122 is part of the active site.

Belongs to the peptidase S14 family. As to quaternary structure, fourteen ClpP subunits assemble into 2 heptameric rings which stack back to back to give a disk-like structure with a central cavity, resembling the structure of eukaryotic proteasomes.

It is found in the cytoplasm. It carries out the reaction Hydrolysis of proteins to small peptides in the presence of ATP and magnesium. alpha-casein is the usual test substrate. In the absence of ATP, only oligopeptides shorter than five residues are hydrolyzed (such as succinyl-Leu-Tyr-|-NHMec, and Leu-Tyr-Leu-|-Tyr-Trp, in which cleavage of the -Tyr-|-Leu- and -Tyr-|-Trp bonds also occurs).. In terms of biological role, cleaves peptides in various proteins in a process that requires ATP hydrolysis. Has a chymotrypsin-like activity. Plays a major role in the degradation of misfolded proteins. This is ATP-dependent Clp protease proteolytic subunit from Thermus thermophilus (strain ATCC BAA-163 / DSM 7039 / HB27).